The primary structure comprises 458 residues: COBRA-like protein 2 (458 aa).

Positions 1–29 are cleaved as a signal peptide; it reads MARFLLGAAAIALLAGVSSLLLMVPFAEA. N-linked (GlcNAc...) asparagine glycosylation is found at N38, N163, N171, N211, N236, N318, N333, and N352. Residues 430-450 traverse the membrane as a helical segment; that stretch reads VFLLMSFLVCGTLAFLHNHLV.

This sequence belongs to the COBRA family.

Its subcellular location is the membrane. In Oryza sativa subsp. japonica (Rice), this protein is COBRA-like protein 2 (BC1L2).